A 267-amino-acid chain; its full sequence is MKKILLTNDDGYHAKGIKALEQALEEMAEIYVVAPKHEKSACSQCITITAPLRAEKIKGKEGRHYRIDDGTPSDCVYLAINELFKHVCFDLVISGINLGSNMGEDTIYSGTVAGAIEGTIQGVPSIAISQILSNKNKNTPLSFDLAQKIIQDLVQNIFTKGYPLKGRKLLNVNVPNCSLQEYQGERITPKGYRLYKKEVHKRTDPKNESYFWLGLHPLEWQKRENEDRLSDFDAIASNHASITPLNLDLTSYDDLKSLESWHEGMLK.

A divalent metal cation-binding residues include aspartate 9, aspartate 10, serine 40, and asparagine 97.

It belongs to the SurE nucleotidase family. Requires a divalent metal cation as cofactor.

It is found in the cytoplasm. The catalysed reaction is a ribonucleoside 5'-phosphate + H2O = a ribonucleoside + phosphate. Nucleotidase that shows phosphatase activity on nucleoside 5'-monophosphates. This is 5'-nucleotidase SurE from Helicobacter pylori (strain ATCC 700392 / 26695) (Campylobacter pylori).